The sequence spans 409 residues: Serine/threonine transporter SstT (409 aa).

The next 9 membrane-spanning stretches (helical) occupy residues 24 to 44 (LALG…AGLF), 48 to 68 (FVGA…AATI), 82 to 102 (IIVL…IAGM), 142 to 162 (AIAN…GAAL), 194 to 214 (LGIF…ALAG), 218 to 238 (LLAV…PAIV), 292 to 312 (IPLG…VLAM), 319 to 339 (GIQV…VSAC), and 365 to 385 (VAMQ…SAET).

Belongs to the dicarboxylate/amino acid:cation symporter (DAACS) (TC 2.A.23) family.

The protein resides in the cell inner membrane. It carries out the reaction L-serine(in) + Na(+)(in) = L-serine(out) + Na(+)(out). The catalysed reaction is L-threonine(in) + Na(+)(in) = L-threonine(out) + Na(+)(out). Functionally, involved in the import of serine and threonine into the cell, with the concomitant import of sodium (symport system). The polypeptide is Serine/threonine transporter SstT (Neisseria meningitidis serogroup C (strain 053442)).